Reading from the N-terminus, the 102-residue chain is Large ribosomal subunit protein bL21 (102 aa).

The protein belongs to the bacterial ribosomal protein bL21 family. As to quaternary structure, part of the 50S ribosomal subunit. Contacts protein L20.

This protein binds to 23S rRNA in the presence of protein L20. The protein is Large ribosomal subunit protein bL21 of Pediococcus pentosaceus (strain ATCC 25745 / CCUG 21536 / LMG 10740 / 183-1w).